A 287-amino-acid polypeptide reads, in one-letter code: Prepilin leader peptidase/N-methyltransferase (287 aa).

Transmembrane regions (helical) follow at residues 10–30 (LGFP…NVVI), 101–121 (ISIQ…ASVW), 125–145 (FGWQ…MSGI), 177–197 (KPAL…WWLF), 226–246 (ILPI…IWLF), and 253–273 (ATPI…FFWG).

The protein belongs to the peptidase A24 family.

It is found in the cell inner membrane. It catalyses the reaction Typically cleaves a -Gly-|-Phe- bond to release an N-terminal, basic peptide of 5-8 residues from type IV prepilin, and then N-methylates the new N-terminal amino group, the methyl donor being S-adenosyl-L-methionine.. In terms of biological role, plays an essential role in type IV pili and type II pseudopili formation by proteolytically removing the leader sequence from substrate proteins and subsequently monomethylating the alpha-amino group of the newly exposed N-terminal phenylalanine. The protein is Prepilin leader peptidase/N-methyltransferase (xpsO) of Xanthomonas campestris pv. campestris (strain ATCC 33913 / DSM 3586 / NCPPB 528 / LMG 568 / P 25).